The chain runs to 500 residues: MLNINFVNEESSTNQGLIVFIDEQLKFDTSLMALDQQHYGLISKTIQNKLQFRGNYGQITIVPSVIKSGEVKYLIIVGLGNAEKLTEAKIEELGGKILQHATCAKISTIGLKIMSRINRFTPQTFTSLIASGAFLASYRFHKYKTTLKEVEKFAVESIEIFTDNNSEAIKLFEVKKLIAEAVFFTRDISNEPSNIKTPQVYAERIVDILEPLGVNVDVIGERDIKNLGMGALLGVGQGSQNESKLVVMEYKGGSRDDSTIALVGKGVIFDTGGISLKPSSNMHLMRYDMAGSAAVVGAIIALASQKATVNVVGVVGLVENMQSGNAQRPGDVVVTMSGQTAEVLNTDAEGRLVLADTVWYVQEKFNPKCVIDVATLTGAITVALGSTYAGCFSNNDELADKLIKAGEEVNEKLWRMPLHDDYDAMINSDIADIANIGNVPGAAGSCTAAHFIKRFIKDGVDWAHLDIAGVANSNNASALGPKGAVGYGVRLLEKFIKEYN.

Residues Lys265 and Asp270 each contribute to the Mn(2+) site. Lys277 is a catalytic residue. Positions 288, 347, and 349 each coordinate Mn(2+). Arg351 is a catalytic residue.

Belongs to the peptidase M17 family. The cofactor is Mn(2+).

The protein localises to the cytoplasm. It catalyses the reaction Release of an N-terminal amino acid, Xaa-|-Yaa-, in which Xaa is preferably Leu, but may be other amino acids including Pro although not Arg or Lys, and Yaa may be Pro. Amino acid amides and methyl esters are also readily hydrolyzed, but rates on arylamides are exceedingly low.. The catalysed reaction is Release of an N-terminal amino acid, preferentially leucine, but not glutamic or aspartic acids.. Presumably involved in the processing and regular turnover of intracellular proteins. Catalyzes the removal of unsubstituted N-terminal amino acids from various peptides. The chain is Probable cytosol aminopeptidase from Rickettsia typhi (strain ATCC VR-144 / Wilmington).